The following is a 184-amino-acid chain: Peptidyl-tRNA hydrolase (184 aa).

TRNA is bound at residue Tyr14. The active-site Proton acceptor is His19. TRNA-binding residues include Phe64, Asn66, and Asn112.

This sequence belongs to the PTH family. Monomer.

The protein resides in the cytoplasm. The enzyme catalyses an N-acyl-L-alpha-aminoacyl-tRNA + H2O = an N-acyl-L-amino acid + a tRNA + H(+). Functionally, hydrolyzes ribosome-free peptidyl-tRNAs (with 1 or more amino acids incorporated), which drop off the ribosome during protein synthesis, or as a result of ribosome stalling. In terms of biological role, catalyzes the release of premature peptidyl moieties from peptidyl-tRNA molecules trapped in stalled 50S ribosomal subunits, and thus maintains levels of free tRNAs and 50S ribosomes. This is Peptidyl-tRNA hydrolase from Thermoanaerobacter pseudethanolicus (strain ATCC 33223 / 39E) (Clostridium thermohydrosulfuricum).